We begin with the raw amino-acid sequence, 197 residues long: Pyridoxal 5'-phosphate synthase subunit PdxT (197 aa).

L-glutamine is bound at residue 53–55; that stretch reads GES. The active-site Nucleophile is Cys-85. L-glutamine contacts are provided by residues Arg-114 and 142 to 143; that span reads IR. Active-site charge relay system residues include His-179 and Glu-181.

This sequence belongs to the glutaminase PdxT/SNO family. In the presence of PdxS, forms a dodecamer of heterodimers. Only shows activity in the heterodimer.

It catalyses the reaction aldehydo-D-ribose 5-phosphate + D-glyceraldehyde 3-phosphate + L-glutamine = pyridoxal 5'-phosphate + L-glutamate + phosphate + 3 H2O + H(+). It carries out the reaction L-glutamine + H2O = L-glutamate + NH4(+). It participates in cofactor biosynthesis; pyridoxal 5'-phosphate biosynthesis. Catalyzes the hydrolysis of glutamine to glutamate and ammonia as part of the biosynthesis of pyridoxal 5'-phosphate. The resulting ammonia molecule is channeled to the active site of PdxS. The protein is Pyridoxal 5'-phosphate synthase subunit PdxT of Pyrococcus furiosus (strain ATCC 43587 / DSM 3638 / JCM 8422 / Vc1).